A 442-amino-acid polypeptide reads, in one-letter code: 23S rRNA (uracil(1939)-C(5))-methyltransferase RlmD (442 aa).

The 59-residue stretch at 12–70 (SKQLSAKVTLEVTKLDHLGAGMAQHQGKIVFIPGALPNEKVTVQLTEQKKRHARAKLLK) folds into the TRAM domain. 4 residues coordinate [4Fe-4S] cluster: Cys-83, Cys-89, Cys-92, and Cys-171. Positions 276, 305, 310, 326, 353, and 373 each coordinate S-adenosyl-L-methionine. Residue Cys-399 is the Nucleophile of the active site.

This sequence belongs to the class I-like SAM-binding methyltransferase superfamily. RNA M5U methyltransferase family. RlmD subfamily.

It carries out the reaction uridine(1939) in 23S rRNA + S-adenosyl-L-methionine = 5-methyluridine(1939) in 23S rRNA + S-adenosyl-L-homocysteine + H(+). In terms of biological role, catalyzes the formation of 5-methyl-uridine at position 1939 (m5U1939) in 23S rRNA. The sequence is that of 23S rRNA (uracil(1939)-C(5))-methyltransferase RlmD from Shewanella sediminis (strain HAW-EB3).